A 122-amino-acid polypeptide reads, in one-letter code: Large ribosomal subunit protein bL12 (122 aa).

The protein belongs to the bacterial ribosomal protein bL12 family. As to quaternary structure, homodimer. Part of the ribosomal stalk of the 50S ribosomal subunit. Forms a multimeric L10(L12)X complex, where L10 forms an elongated spine to which 2 to 4 L12 dimers bind in a sequential fashion. Binds GTP-bound translation factors.

Functionally, forms part of the ribosomal stalk which helps the ribosome interact with GTP-bound translation factors. Is thus essential for accurate translation. In Clostridium botulinum (strain 657 / Type Ba4), this protein is Large ribosomal subunit protein bL12.